The sequence spans 362 residues: Forkhead box protein F (362 aa).

The interval 19–70 is disordered; the sequence is LDSTAPNNSHRTIKAENYFNEDEEDYNENSHEDSEDSKEDSDGQGCRSRKRK. Acidic residues predominate over residues 37 to 57; the sequence is FNEDEEDYNENSHEDSEDSKE. Residues 72–169 constitute a DNA-binding region (fork-head); it reads KPPFSYIALI…EENGFRRRPR (98 aa).

The protein resides in the nucleus. Functionally, transcription factor that is required for cell fate of coelomocytes which are non-muscle mesodermal cells. Acts in concert with, and by activating expression of, the homeodomain gene ceh-34. Binds to the sequence motif 5'-ATAAA[T/C]A-3'. In Caenorhabditis elegans, this protein is Forkhead box protein F.